The sequence spans 415 residues: NEDD8-specific protease 2 (415 aa).

The segment at 1–42 (MRSNSIFTKEIDSEAVKKSSNLRPPSTGSSNSNGSDTASPKK) is disordered. A compositionally biased stretch (low complexity) spans 26 to 38 (STGSSNSNGSDTA). Position 35 is a phosphoserine (serine 35). Active-site residues include histidine 171, aspartate 188, and cysteine 229. Residues 320-415 (AVTSDSAQPH…QHTQQSIEIH (96 aa)) are disordered. 3 stretches are compositionally biased toward polar residues: residues 335–368 (MPSS…NSSP), 379–390 (TASTSVLPTSIL), and 405–415 (IQHTQQSIEIH). Serine 367 carries the post-translational modification Phosphoserine.

This sequence belongs to the peptidase C48 family.

Its subcellular location is the cytoplasm. It is found in the nucleus. In terms of biological role, protease that catalyzes two essential functions in the NEDD8 pathway: processing of full-length NEDD8 to its mature form and deconjugation of NEDD8 from targeted proteins such as the pcu1, pcu2 and pcu4 cullins and other proteins. Has a role in meiosis. This Schizosaccharomyces pombe (strain 972 / ATCC 24843) (Fission yeast) protein is NEDD8-specific protease 2 (nep2).